We begin with the raw amino-acid sequence, 297 residues long: 4-diphosphocytidyl-2-C-methyl-D-erythritol kinase (297 aa).

Lys19 is an active-site residue. 105-115 (PIASGIGGGSA) is a binding site for ATP. Asp147 is an active-site residue.

The protein belongs to the GHMP kinase family. IspE subfamily.

The enzyme catalyses 4-CDP-2-C-methyl-D-erythritol + ATP = 4-CDP-2-C-methyl-D-erythritol 2-phosphate + ADP + H(+). Its pathway is isoprenoid biosynthesis; isopentenyl diphosphate biosynthesis via DXP pathway; isopentenyl diphosphate from 1-deoxy-D-xylulose 5-phosphate: step 3/6. Functionally, catalyzes the phosphorylation of the position 2 hydroxy group of 4-diphosphocytidyl-2C-methyl-D-erythritol. The polypeptide is 4-diphosphocytidyl-2-C-methyl-D-erythritol kinase (Rhizobium etli (strain CIAT 652)).